We begin with the raw amino-acid sequence, 332 residues long: Ferredoxin--NADP reductase (332 aa).

FAD contacts are provided by E36, Q44, Y49, V91, F124, and T327.

This sequence belongs to the ferredoxin--NADP reductase type 2 family. As to quaternary structure, homodimer. FAD is required as a cofactor.

It catalyses the reaction 2 reduced [2Fe-2S]-[ferredoxin] + NADP(+) + H(+) = 2 oxidized [2Fe-2S]-[ferredoxin] + NADPH. In Streptococcus thermophilus (strain CNRZ 1066), this protein is Ferredoxin--NADP reductase.